A 121-amino-acid chain; its full sequence is Urotensin-2 (121 aa).

An N-terminal signal peptide occupies residues 1 to 19 (MSKLVPCLLLLGCLGLLFA). Residues 20–106 (LPVPDSRKEP…HLLARIKKPY (87 aa)) constitute a propeptide that is removed on maturation. A disulfide bridge connects residues cysteine 115 and cysteine 120.

The protein belongs to the urotensin-2 family.

It localises to the secreted. Functionally, highly potent vasoconstrictor. The sequence is that of Urotensin-2 (UTS2) from Sus scrofa (Pig).